The sequence spans 1090 residues: Nitrogen assimilation transcription factor nit-4 (1090 aa).

Polar residues predominate over residues 1-14 (MNSSDVQMMSSQDA). The segment at 1–43 (MNSSDVQMMSSQDAPGSAGLAPDNIASSLPSKKKSRRGADPTN) is disordered. Residues 53–81 (CIACRRRKSKCDGALPSCAACASVYGTEC) constitute a DNA-binding region (zn(2)-C6 fungal-type). Disordered stretches follow at residues 145-176 (RRDEKNATATNDNDDSDEPTQPGRDDATSQAV), 666-689 (FSTSEVPSPNRTAPSLAPSSPAPP), 773-798 (HQHHHHLQNQHQPQQPHHNHMTYQQQ), 825-875 (GIPT…VKPP), 936-999 (QGWD…QRQQ), and 1033-1053 (HGAERGGGGIESTGMGMTTVG). The span at 167–176 (GRDDATSQAV) shows a compositional bias: basic and acidic residues. Residues 666–677 (FSTSEVPSPNRT) show a composition bias toward polar residues. A compositionally biased stretch (low complexity) spans 849-859 (QPQQQQQPQAQ). Gly residues-rich tracts occupy residues 940-965 (LEGGGAGTATSTGGIGDGGGPTGGAG) and 976-988 (NIGGGGGGGGGST). Over residues 990–999 (QRQQQQQRQQ) the composition is skewed to low complexity.

Its subcellular location is the nucleus. In terms of biological role, pathway-specific regulatory gene of nitrate assimilation; it activates the transcription of the genes for nitrate and nitrite reductases. The sequence is that of Nitrogen assimilation transcription factor nit-4 (nit-4) from Neurospora crassa (strain ATCC 24698 / 74-OR23-1A / CBS 708.71 / DSM 1257 / FGSC 987).